The following is a 246-amino-acid chain: FAD synthetase (246 aa).

The protein belongs to the RibF family.

It carries out the reaction FMN + ATP + H(+) = FAD + diphosphate. It functions in the pathway cofactor biosynthesis; FAD biosynthesis; FAD from FMN: step 1/1. Functionally, catalyzes the adenylation of flavin mononucleotide (FMN) to form flavin adenine dinucleotide (FAD) coenzyme. Can also catalyze, with lower efficiency, the adenylation of the toxic riboflavin analogs 8-demethyl-8-aminoriboflavin mononucleotide (AFMN) and roseoflavin mononucleotide (RoFMN) to 8-demethyl-8-aminoriboflavin adenine dinucleotide (AFAD) and roseoflavin adenine dinucleotide (RoFAD), respectively. In Listeria monocytogenes serovar 1/2a (strain ATCC BAA-679 / EGD-e), this protein is FAD synthetase.